The following is a 447-amino-acid chain: Probable asparagine--tRNA ligase, cytoplasmic (447 aa).

The protein belongs to the class-II aminoacyl-tRNA synthetase family.

It localises to the cytoplasm. The catalysed reaction is tRNA(Asn) + L-asparagine + ATP = L-asparaginyl-tRNA(Asn) + AMP + diphosphate + H(+). The polypeptide is Probable asparagine--tRNA ligase, cytoplasmic (Vairimorpha ceranae (strain BRL01) (Microsporidian parasite)).